The chain runs to 190 residues: Threonylcarbamoyl-AMP synthase (190 aa).

In terms of domain architecture, YrdC-like spans 7–190 (TGSIAAVVDL…ALTGELFRQG (184 aa)).

It belongs to the SUA5 family. TsaC subfamily.

Its subcellular location is the cytoplasm. The enzyme catalyses L-threonine + hydrogencarbonate + ATP = L-threonylcarbamoyladenylate + diphosphate + H2O. Functionally, required for the formation of a threonylcarbamoyl group on adenosine at position 37 (t(6)A37) in tRNAs that read codons beginning with adenine. Catalyzes the conversion of L-threonine, HCO(3)(-)/CO(2) and ATP to give threonylcarbamoyl-AMP (TC-AMP) as the acyladenylate intermediate, with the release of diphosphate. The chain is Threonylcarbamoyl-AMP synthase from Salmonella paratyphi A (strain ATCC 9150 / SARB42).